Reading from the N-terminus, the 152-residue chain is MQYHSALYVYIYVTFTTIPYKEKPDIISICFSMLSFVFDFSVRICSRTLESFSWSLISSSAFKVVSAFSLAGSCVLASRSSVGIIVSLLLFNFSTCNFVLFLSAVLIDLFFCTFLPTPTFLPTPFFFMLHLPIFSLLNALELLYLIIAGLHI.

A run of 5 helical transmembrane segments spans residues 26-46 (IISI…RICS), 56-76 (LISS…SCVL), 82-102 (VGII…VLFL), 106-126 (LIDL…TPFF), and 127-147 (FMLH…YLII).

It localises to the cell membrane. The protein resides in the secreted. The protein localises to the cell wall. Involved in maintaining an adequate ionic strength homeostasis of the cellular aqueous environment, necessary for normal growth rate. Required for survival upon exposure to K1 killer toxin and hence plays a role in cell wall glucan synthesis. Required for dithiothreitol (DTT) resistance. Involved in cell cycle progression. The protein is Protein FYV5 (FYV5) of Saccharomyces cerevisiae (strain ATCC 204508 / S288c) (Baker's yeast).